Here is a 1456-residue protein sequence, read N- to C-terminus: MISLSLVLLLLFGVRCFDSAGQINDDSPLFISTSIDNSMNLKILVEKKPYFTGSVTGYKLYYTNDSSQTNEEYEKWMHQEALSNQNSYNFVIDANKHEIVSGDVYRVRATVFFNNVESVPTGVISINTRQSIPKAPLIVNTKILYNSSVLISFVPADDVNAIENYTLMYKQMEAEEWKSLNFKSDFDGKVLLDGLIPNHTYEIKIFVTGGIVQGTPSNLATFTTNSTALALVKTEPDEEYTADPQTNEPLSITCTVKSVSKASVLWKVNGIKVSVDSSFYTVVTSVHEDFIESTIRAKSRTRSAKFTCLATNDAGDSSKEVNVIIKGPGSPPSEITLVAEKRGYTISWKPPSHPNGKITKYVVYHTLNREDPLSDWRKIDLDGSEKMVRIIMDTEESFYGRVQAATELGPGIISDIVAMERDTQPISVESDLFGVSATTMVVNPRETLSIQCTARGKPRPSISVAISDRKNASQVEVDVWSRLQATSSAGIVSAVHNFSVLTSKFVHCRAKNSAGSNYSTMELKVDKPGDAPTQIQVLSVNALDALVVWHSPQFPNSPITSYIVLVSNDDKEDKSTWLQYESNAKETQINRMLLPTGNLEKSTEYFVCVRAKNAAGIGPTSSLISFITLNGGPDSPPDNLKVLINEANQVIVYWNTPNSTTEVTGYLIYYTRDLSLSNDDYKNWQFVEMNNNSTRYKFDLSVGLKPKTFYRVRISGKNSHADGPASEVVEFETAYSEVPIPTDLKTEVLDDNTIHIKFNAVRDPDDHSKALGEYRIDLAATDDVLHALWKQIEPKSIKIDEISSMVDVEIDGDSVEKNQMYWVKVTARLDNPSWGMHSSKPRWFRTGHGKLMTSVTLEGAPLIEKEPNLFEELSVTCTGMGSPAPIITWEWMNKSIENGTEGWNILNIQIDDTTVVSKITRNNIRESGDLTCLANNNEGSSSASVEIRVLGPGNPPENIILTAYRNQINVTWQESTLPNGDIMKYIVYYSENENDDLSDWNKFETAELETYVETFGPHTKHFIRVQAVSDRGPGIISNVLSCISDVLYETIHLEIVASNILDFEAEPNQNVEIRCKGTGKPQPELFYQFANETEQNFVEVETNDMDLFEAKAPEINSRRNVTVTCRASNKYENVTISKVIIIKRPGEAPTNISWSFEEEYDSTLYINWNPIENANGEKLEYNLYLSNYKTKVSGPPVKIPDIPLDVNISLRVSAENEYGEGEKTFPIWIPTPNGGPKTAPILSSLHAQDSKVYIFWVEPRLPNGEIQNYTIYIQKENESENEEHSIDKEWKKFIYGSNITHVIIGVDDGLEENERYQMKMTATNQRHEGPETKVYTFDLISFDENDVIDNFTAIVINSTVFVEVGNPIYTKYNIYIREDGNNQTVKHEIDVESGKTTFEFPFQLDHTLSYTIKMSGMKLGRESPPSEEIDLEFISSPSPTPIISGSRRKVIKEPPL.

An N-terminal signal peptide occupies residues 1-16; sequence MISLSLVLLLLFGVRC. Fibronectin type-III domains lie at 24–128 and 132–227; these read NDDS…SINT and IPKA…TNST. Asn-64, Asn-146, Asn-164, Asn-198, and Asn-225 each carry an N-linked (GlcNAc...) asparagine glycan. The Ig-like 1 domain occupies 236–322; the sequence is PDEEYTADPQ…DAGDSSKEVN (87 aa). Cys-254 and Cys-308 are oxidised to a cystine. Positions 328–426 constitute a Fibronectin type-III 3 domain; sequence PGSPPSEITL…VAMERDTQPI (99 aa). N-linked (GlcNAc...) asparagine glycosylation is found at Asn-471, Asn-497, and Asn-517. Fibronectin type-III domains are found at residues 531–631, 636–736, and 737–846; these read APTQ…TLNG, PPDN…TAYS, and EVPI…WFRT. Asn-658, Asn-691, and Asn-692 each carry an N-linked (GlcNAc...) asparagine glycan. Residues 841-948 form the Ig-like 2 domain; it reads PRWFRTGHGK…GSSSASVEIR (108 aa). The cysteines at positions 877 and 932 are disulfide-linked. N-linked (GlcNAc...) asparagine glycosylation is found at Asn-893, Asn-898, Asn-969, Asn-1091, Asn-1120, Asn-1133, Asn-1151, Asn-1207, Asn-1268, Asn-1277, Asn-1298, Asn-1350, Asn-1357, and Asn-1382. One can recognise a Fibronectin type-III 7 domain in the interval 955–1050; that stretch reads PPENIILTAY…SCISDVLYET (96 aa). 3 Fibronectin type-III domains span residues 1148-1234, 1236-1343, and 1347-1438; these read APTN…TPNG, PKTA…ISFD, and VIDN…SSPS. The interval 1419 to 1456 is disordered; sequence LGRESPPSEEIDLEFISSPSPTPIISGSRRKVIKEPPL. Over residues 1434–1445 the composition is skewed to low complexity; sequence ISSPSPTPIISG.

It is found in the secreted. The sequence is that of Ig-like and fibronectin type-III domain-containing protein C27B7.7 from Caenorhabditis elegans.